The chain runs to 352 residues: Outer membrane protein assembly factor BamC (352 aa).

An N-terminal signal peptide occupies residues 1 to 24; sequence MAISLQKSTVVKVVGVSLVMLLAA. C25 carries N-palmitoyl cysteine lipidation. C25 is lipidated: S-diacylglycerol cysteine.

The protein belongs to the BamC family. In terms of assembly, part of the Bam complex, which is composed of the outer membrane protein BamA, and four lipoproteins BamB, BamC, BamD and BamE.

It is found in the cell outer membrane. Part of the outer membrane protein assembly complex, which is involved in assembly and insertion of beta-barrel proteins into the outer membrane. In Yersinia pestis, this protein is Outer membrane protein assembly factor BamC.